The following is a 103-amino-acid chain: N(4)-acetylcytidine amidohydrolase (103 aa).

The ASCH domain occupies 7 to 93 (TFFERFEQDI…VIAEIYPGLE (87 aa)). Lys21 serves as the catalytic Proton acceptor. Catalysis depends on Thr24, which acts as the Nucleophile. Glu74 functions as the Proton donor in the catalytic mechanism.

It belongs to the N(4)-acetylcytidine amidohydrolase family.

It catalyses the reaction N(4)-acetylcytidine + H2O = cytidine + acetate + H(+). The enzyme catalyses N(4)-acetyl-2'-deoxycytidine + H2O = 2'-deoxycytidine + acetate + H(+). It carries out the reaction N(4)-acetylcytosine + H2O = cytosine + acetate + H(+). Functionally, catalyzes the hydrolysis of N(4)-acetylcytidine (ac4C). This Shewanella putrefaciens (strain CN-32 / ATCC BAA-453) protein is N(4)-acetylcytidine amidohydrolase.